The chain runs to 332 residues: Putative threonine dehydratase (332 aa).

N6-(pyridoxal phosphate)lysine is present on Lys56.

It belongs to the serine/threonine dehydratase family. Pyridoxal 5'-phosphate serves as cofactor.

It catalyses the reaction L-threonine = 2-oxobutanoate + NH4(+). It functions in the pathway amino-acid biosynthesis; L-isoleucine biosynthesis; 2-oxobutanoate from L-threonine: step 1/1. The chain is Putative threonine dehydratase from Sinorhizobium fredii (strain NBRC 101917 / NGR234).